The primary structure comprises 371 residues: RT1 class I histocompatibility antigen, AA alpha chain (371 aa).

Residues 1–24 (MEAMAPRTLLLLLAAALAPTQTRA) form the signal peptide. The segment at 25 to 114 (GSHSLRYFYT…LRGYYNQSEG (90 aa)) is alpha-1. At 25–311 (GSHSLRYFYT…PSTDSNMETT (287 aa)) the chain is on the extracellular side. N110 carries N-linked (GlcNAc...) asparagine glycosylation. Positions 115-206 (GSHTIQEMYG…ELGKETLLRS (92 aa)) are alpha-2. The alpha-3 stretch occupies residues 207 to 298 (DPPEAHVTLH…GLPKPLSQRW (92 aa)). The region spanning 209 to 295 (PEAHVTLHPR…EHEGLPKPLS (87 aa)) is the Ig-like C1-type domain. A glycan (N-linked (GlcNAc...) asparagine) is linked at N280. Residues 299–311 (EPSPSTDSNMETT) are connecting peptide. Residues 312 to 336 (VIYVILGAVAMIGAVAIIGAMVAVV) form a helical membrane-spanning segment. Topologically, residues 337-371 (RRRKRNTGGKGGDYAPAPGRDSSQSSDVSLPDCKA) are cytoplasmic. The disordered stretch occupies residues 342–371 (NTGGKGGDYAPAPGRDSSQSSDVSLPDCKA). 2 positions are modified to phosphoserine: S362 and S365.

The protein belongs to the MHC class I family. In terms of assembly, heterodimer of an alpha chain and a beta chain (beta-2-microglobulin).

Its subcellular location is the membrane. Involved in the presentation of foreign antigens to the immune system. The sequence is that of RT1 class I histocompatibility antigen, AA alpha chain from Rattus norvegicus (Rat).